Consider the following 294-residue polypeptide: Bifunctional protein FolD (294 aa).

NADP(+)-binding positions include 166–168, Ser191, and Ile232; that span reads GRS.

It belongs to the tetrahydrofolate dehydrogenase/cyclohydrolase family. Homodimer.

The catalysed reaction is (6R)-5,10-methylene-5,6,7,8-tetrahydrofolate + NADP(+) = (6R)-5,10-methenyltetrahydrofolate + NADPH. It catalyses the reaction (6R)-5,10-methenyltetrahydrofolate + H2O = (6R)-10-formyltetrahydrofolate + H(+). The protein operates within one-carbon metabolism; tetrahydrofolate interconversion. Catalyzes the oxidation of 5,10-methylenetetrahydrofolate to 5,10-methenyltetrahydrofolate and then the hydrolysis of 5,10-methenyltetrahydrofolate to 10-formyltetrahydrofolate. This Nitrobacter hamburgensis (strain DSM 10229 / NCIMB 13809 / X14) protein is Bifunctional protein FolD.